A 574-amino-acid chain; its full sequence is Septation ring formation regulator EzrA (574 aa).

At 1–7 (MPTGTII) the chain is on the extracellular side. Residues 8–26 (LIVSIVIILIIAYVACLIV) traverse the membrane as a helical segment. At 27 to 574 (RKRNDNLLVA…YEKTREAIRY (548 aa)) the chain is on the cytoplasmic side. Residues 105–189 (SAKNAIDSID…IEVEFSEFVM (85 aa)) adopt a coiled-coil conformation.

Belongs to the EzrA family.

It is found in the cell membrane. Its function is as follows. Negative regulator of FtsZ ring formation; modulates the frequency and position of FtsZ ring formation. Inhibits FtsZ ring formation at polar sites. Interacts either with FtsZ or with one of its binding partners to promote depolymerization. The polypeptide is Septation ring formation regulator EzrA (Streptococcus suis (strain 98HAH33)).